Reading from the N-terminus, the 344-residue chain is MDDNKAKALAAALSQIEKQFGKGSIMRMGDGNVEKDIQTVSTGSLGLDIALGLGGLPRGRVVEIYGPESSGKTTLTLQVVAEMQKLGGTAAFIDAEHALDVGYAEKLGVNITDLLISQPDTGEQALEIADMLVRSGGVDVVVIDSVAALTPKAEIEGEMGDQLPGLQARLMSQALRKLTANIKRTNTLVIFINQIRMKIGVMFGNPETTTGGNALKFYASVRMDIRRTGTIKRGDEVVGSETKVKVVKNKVSPPFKEAHFDILYGEGVSREGEIIDLGVDHKIVDKSGAWYAYNGDKIGQGKDNAREFLRANPALAREIENKVRVVLGLKELPVDGAQPAAAEA.

G66–T73 lines the ATP pocket.

Belongs to the RecA family.

The protein resides in the cytoplasm. In terms of biological role, can catalyze the hydrolysis of ATP in the presence of single-stranded DNA, the ATP-dependent uptake of single-stranded DNA by duplex DNA, and the ATP-dependent hybridization of homologous single-stranded DNAs. It interacts with LexA causing its activation and leading to its autocatalytic cleavage. This chain is Protein RecA, found in Azoarcus sp. (strain BH72).